The chain runs to 235 residues: Segregation and condensation protein A (235 aa).

It belongs to the ScpA family. Component of a cohesin-like complex composed of ScpA, ScpB and the Smc homodimer, in which ScpA and ScpB bind to the head domain of Smc. The presence of the three proteins is required for the association of the complex with DNA.

It is found in the cytoplasm. In terms of biological role, participates in chromosomal partition during cell division. May act via the formation of a condensin-like complex containing Smc and ScpB that pull DNA away from mid-cell into both cell halves. The protein is Segregation and condensation protein A of Streptococcus agalactiae serotype III (strain NEM316).